Reading from the N-terminus, the 206-residue chain is Triosephosphate isomerase (206 aa).

Catalysis depends on H76, which acts as the Electrophile. The Proton acceptor role is filled by E146.

It belongs to the triosephosphate isomerase family. In terms of assembly, homodimer.

The catalysed reaction is D-glyceraldehyde 3-phosphate = dihydroxyacetone phosphate. It functions in the pathway carbohydrate biosynthesis; gluconeogenesis. Its pathway is carbohydrate degradation; glycolysis; D-glyceraldehyde 3-phosphate from glycerone phosphate: step 1/1. The chain is Triosephosphate isomerase (Tpi) from Anopheles merus (Mosquito).